A 670-amino-acid chain; its full sequence is Probable membrane-anchored ferredoxin csal_0991 (670 aa).

5 helical membrane passes run 2-22 (LDIL…IGAV), 68-90 (VATA…LGLA), 94-113 (LGWL…LFVA), 135-155 (LMAF…VLPA), and 159-179 (GWLV…ELVF). 2 consecutive 4Fe-4S ferredoxin-type domains span residues 241–271 (WNQL…PLNP) and 316–347 (GTAL…HVDA). [4Fe-4S] cluster contacts are provided by C250, C253, C256, C260, C328, C331, C334, and C338. Residues 648–670 (NTPPATPASHDTAASQATEEVLS) form a disordered region. A compositionally biased stretch (polar residues) spans 659-670 (TAASQATEEVLS).

Requires [4Fe-4S] cluster as cofactor.

It localises to the cell inner membrane. Its function is as follows. Participates in the electron transfer process during N,N-dimethylglycine (DMG) degradation to sarcosine. Probably transfers the electrons from N,N-dimethylglycine/sarcosine dehydrogenase (DMGDH) to the electron transfer flavoprotein (ETF) EtfA-EtfB. This is Probable membrane-anchored ferredoxin csal_0991 from Chromohalobacter salexigens (strain ATCC BAA-138 / DSM 3043 / CIP 106854 / NCIMB 13768 / 1H11).